The sequence spans 214 residues: Orotidine 5'-phosphate decarboxylase (214 aa).

Substrate is bound by residues Asp11, Lys33, 59-68, Ser114, 164-174, Gly187, and Arg188; these read DFKIADIPNT and PGIGSQGGRAS. Catalysis depends on Lys61, which acts as the Proton donor.

Belongs to the OMP decarboxylase family. Type 1 subfamily. In terms of assembly, homodimer.

It catalyses the reaction orotidine 5'-phosphate + H(+) = UMP + CO2. It participates in pyrimidine metabolism; UMP biosynthesis via de novo pathway; UMP from orotate: step 2/2. Functionally, catalyzes the decarboxylation of orotidine 5'-monophosphate (OMP) to uridine 5'-monophosphate (UMP). In Thermoplasma acidophilum (strain ATCC 25905 / DSM 1728 / JCM 9062 / NBRC 15155 / AMRC-C165), this protein is Orotidine 5'-phosphate decarboxylase.